The sequence spans 165 residues: Glycine cleavage system H protein, mitochondrial (165 aa).

A mitochondrion-targeting transit peptide spans M1–F34. In terms of domain architecture, Lipoyl-binding spans V56–K138. An N6-lipoyllysine modification is found at K97.

This sequence belongs to the GcvH family. The glycine cleavage system is composed of four proteins: P, T, L and H. The cofactor is (R)-lipoate.

The protein resides in the mitochondrion. Its function is as follows. The glycine cleavage system catalyzes the degradation of glycine. The H protein shuttles the methylamine group of glycine from the P protein to the T protein. This Pisum sativum (Garden pea) protein is Glycine cleavage system H protein, mitochondrial (GDCSH).